The chain runs to 481 residues: ATP synthase subunit beta, chloroplastic (481 aa).

162–169 (GGAGVGKT) contributes to the ATP binding site.

The protein belongs to the ATPase alpha/beta chains family. F-type ATPases have 2 components, F(1) - the catalytic core - and F(0) - the membrane proton channel. F(1) has five subunits: alpha(3), beta(3), gamma(1), delta(1), epsilon(1). F(0) has four main subunits: a(1), b(1), b'(1) and c(10-14). The alpha and beta chains form an alternating ring which encloses part of the gamma chain. F(1) is attached to F(0) by a central stalk formed by the gamma and epsilon chains, while a peripheral stalk is formed by the delta, b and b' chains.

The protein localises to the plastid. It is found in the chloroplast thylakoid membrane. The catalysed reaction is ATP + H2O + 4 H(+)(in) = ADP + phosphate + 5 H(+)(out). Functionally, f(1)F(0) ATP synthase produces ATP from ADP in the presence of a proton or sodium gradient. F-type ATPases consist of two structural domains, F(1) containing the extramembraneous catalytic core and F(0) containing the membrane proton channel, linked together by a central stalk and a peripheral stalk. During catalysis, ATP synthesis in the catalytic domain of F(1) is coupled via a rotary mechanism of the central stalk subunits to proton translocation. In terms of biological role, produces ATP from ADP in the presence of a proton gradient across the membrane. The catalytic sites are hosted primarily by the beta subunits. The sequence is that of ATP synthase subunit beta, chloroplastic from Chlamydomonas reinhardtii (Chlamydomonas smithii).